A 350-amino-acid chain; its full sequence is Fe(3+) ions import ATP-binding protein FbpC (350 aa).

The ABC transporter domain occupies 4–236 (LDIINLSKSF…PNDEQTAHFL (233 aa)). An ATP-binding site is contributed by 36 to 43 (GPSGSGKT).

It belongs to the ABC transporter superfamily. Fe(3+) ion importer (TC 3.A.1.10) family. As to quaternary structure, the complex is composed of two ATP-binding proteins (FbpC), two transmembrane proteins (FbpB) and a solute-binding protein (FbpA).

The protein localises to the cell inner membrane. The enzyme catalyses Fe(3+)(out) + ATP + H2O = Fe(3+)(in) + ADP + phosphate + H(+). Its function is as follows. Part of the ABC transporter complex FbpABC involved in Fe(3+) ions import. Responsible for energy coupling to the transport system. This is Fe(3+) ions import ATP-binding protein FbpC from Pseudomonas fluorescens (strain Pf0-1).